The chain runs to 476 residues: MKILHVCSELYPLLKTGGLADVLGALPQAQNQIGLDARVLLPAYPAIIAGIPNTQVVAEFDNFAGHVVLRYGEYNGVGIYLIDAPHLYGREGNPYHDAYYNDYGDNYKRFALLGWVGAELATGLDSWWRAEVVHAHDWHAGLCAAYLFNKGRPAKSVFTIHNLAYQGQFSYHHLYEIGLPTGMFHVEGLELFGQISYLKSGLFYSDASTAVSPTYAQEITTPEFAYGLQGLLSGLKAQDRLVGILNGVDENIWHPNVDQYIPHHYKLKYMAGKKKNKAELQAYFNLPQDESALAFVMVTRLTEQKGVDLLIESADEIVKQGGQLMILGSGAPHLEQGIRELAERYPQNIAVKIGYDEALSHLMVAGGDVILVPSRFEPCGLTQLYGLQYGTLPLVRKTGGLADTVVDSTSESIKACTATGFVFESATPEALRHCLQRAFALWQKPRAWAIVRTDAMAQDFSWRKAAEQYRALYERL.

Lys-15 contacts ADP-alpha-D-glucose.

The protein belongs to the glycosyltransferase 1 family. Bacterial/plant glycogen synthase subfamily.

It catalyses the reaction [(1-&gt;4)-alpha-D-glucosyl](n) + ADP-alpha-D-glucose = [(1-&gt;4)-alpha-D-glucosyl](n+1) + ADP + H(+). Its pathway is glycan biosynthesis; glycogen biosynthesis. Its function is as follows. Synthesizes alpha-1,4-glucan chains using ADP-glucose. The protein is Glycogen synthase of Haemophilus influenzae (strain PittGG).